The following is a 613-amino-acid chain: Glutaminase 1 (613 aa).

The tract at residues Gly33–Leu315 is glutaminase. Residues Ser75, Asn124, Glu168, Asn175, Tyr199, Tyr251, and Val269 each coordinate substrate. Positions Arg345 to Asp457 constitute an STAS domain. Leu480–Leu595 is a binding site for a nucleoside 3',5'-cyclic phosphate.

Belongs to the glutaminase family. Homotetramer.

The catalysed reaction is L-glutamine + H2O = L-glutamate + NH4(+). The polypeptide is Glutaminase 1 (glsA1) (Bradyrhizobium diazoefficiens (strain JCM 10833 / BCRC 13528 / IAM 13628 / NBRC 14792 / USDA 110)).